A 95-amino-acid chain; its full sequence is Small ribosomal subunit protein bS6 (95 aa).

It belongs to the bacterial ribosomal protein bS6 family.

In terms of biological role, binds together with bS18 to 16S ribosomal RNA. The protein is Small ribosomal subunit protein bS6 of Aster yellows witches'-broom phytoplasma (strain AYWB).